The chain runs to 421 residues: Testin (421 aa).

Positions 92–199 constitute a PET domain; the sequence is MILTNPVAAK…GDVKLPREMD (108 aa). Residues 133–164 form a disordered region; it reads EKQPVAGSEGAQYRKKQLAKQLPAHDQDPSKC. Positions 155–164 are enriched in basic and acidic residues; sequence PAHDQDPSKC. 3 LIM zinc-binding domains span residues 234–297, 299–359, and 362–421; these read YSCY…CDSE, PRCA…NHAV, and QGCH…KMMS.

It belongs to the prickle / espinas / testin family. As to quaternary structure, interacts via LIM domain 1 with ZYX. Interacts (via LIM domain 3) with ENAH and VASP. Interacts with ALKBH4, talin, actin, alpha-actinin, GRIP1 and PXN. Interacts (via LIM domain 2) with ACTL7A (via N-terminus). Heterodimer with ACTL7A; the heterodimer interacts with ENAH to form a heterotrimer.

It localises to the cytoplasm. Its subcellular location is the cell junction. The protein localises to the focal adhesion. Its function is as follows. Scaffold protein that may play a role in cell adhesion, cell spreading and in the reorganization of the actin cytoskeleton. Plays a role in the regulation of cell proliferation. May act as a tumor suppressor. This chain is Testin (TES), found in Canis lupus familiaris (Dog).